The following is an 80-amino-acid chain: MDNQNIKIYNHLKVHEIIYKTEELLNISDNRYKITIQIANRAKRKKYEDLDIIDDPTIKPIIRSILEMVDEITQPEIISD.

It belongs to the RNA polymerase subunit omega family.

Its subcellular location is the plastid. It is found in the chloroplast. It catalyses the reaction RNA(n) + a ribonucleoside 5'-triphosphate = RNA(n+1) + diphosphate. In terms of biological role, may be involved in RNA polymerase activity. In Gracilaria tenuistipitata var. liui (Red alga), this protein is Putative DNA-directed RNA polymerase subunit omega.